The following is a 288-amino-acid chain: Elongation factor Ts (288 aa).

Positions 82 to 85 (TDFV) are involved in Mg(2+) ion dislocation from EF-Tu.

The protein belongs to the EF-Ts family.

Its subcellular location is the cytoplasm. Its function is as follows. Associates with the EF-Tu.GDP complex and induces the exchange of GDP to GTP. It remains bound to the aminoacyl-tRNA.EF-Tu.GTP complex up to the GTP hydrolysis stage on the ribosome. In Prosthecochloris aestuarii (strain DSM 271 / SK 413), this protein is Elongation factor Ts.